We begin with the raw amino-acid sequence, 757 residues long: Dapper homolog 2 (757 aa).

The segment at 1–281 (MWAPSGQGPA…QSPLFALPKE (281 aa)) is inhibition of Nodal signaling. Residues 55–107 (RGQELRLEAALTALREQLSRLRRQDAGLKTHLDQLDQQISELQLDVSRSSCEA) are a coiled coil. 3 disordered regions span residues 486–540 (RRRV…CSES), 584–684 (RWQS…EGCF), and 696–728 (AEAGQGGWAWPRVPPQQPSRAPGNTRPPLPPVP). Basic and acidic residues-rich tracts occupy residues 505–516 (ERQRVTERDPSR) and 631–644 (ACARCESDPSEHSA). Positions 645 to 656 (DCTSLYHSTIAE) are enriched in polar residues. The segment covering 664-673 (SDHTANRFGD) has biased composition (basic and acidic residues). The short motif at 754–757 (MTMV) is the PDZ-binding element.

Belongs to the dapper family. Can form homodimers and heterodimers with DACT1 or DACT3. Interacts with CSNK1D, PKA catalytic subunit, PKC-type kinase, CSNK2B, DVL1, DVL2, DVL3, VANGL1, VANGL2, TGFBR1, CTNNB1, CTNND2, CTNND1, LEF1, TCF7, TCF7L1 and HDAC1. As to expression, expressed in kidney (inner medullary collecting duct). Expressed in epidermal keratinocytes and hair follicles.

In terms of biological role, involved in regulation of intracellular signaling pathways during development. Negatively regulates the Nodal signaling pathway, possibly by promoting the lysosomal degradation of Nodal receptors, such as TGFBR1. May be involved in control of the morphogenetic behavior of kidney ureteric bud cells by keeping cells epithelial and restraining their mesenchymal character. May play an inhibitory role in the re-epithelialization of skin wounds by attenuating TGF-beta signaling. This is Dapper homolog 2 (Dact2) from Mus musculus (Mouse).